Consider the following 209-residue polypeptide: Imidazole glycerol phosphate synthase subunit HisH (209 aa).

In terms of domain architecture, Glutamine amidotransferase type-1 spans 1-205 (MIAIIDYGMG…KGVVKQWKSS (205 aa)). The active-site Nucleophile is the cysteine 79. Catalysis depends on residues histidine 180 and glutamate 182.

In terms of assembly, heterodimer of HisH and HisF.

It is found in the cytoplasm. The catalysed reaction is 5-[(5-phospho-1-deoxy-D-ribulos-1-ylimino)methylamino]-1-(5-phospho-beta-D-ribosyl)imidazole-4-carboxamide + L-glutamine = D-erythro-1-(imidazol-4-yl)glycerol 3-phosphate + 5-amino-1-(5-phospho-beta-D-ribosyl)imidazole-4-carboxamide + L-glutamate + H(+). It carries out the reaction L-glutamine + H2O = L-glutamate + NH4(+). Its pathway is amino-acid biosynthesis; L-histidine biosynthesis; L-histidine from 5-phospho-alpha-D-ribose 1-diphosphate: step 5/9. Functionally, IGPS catalyzes the conversion of PRFAR and glutamine to IGP, AICAR and glutamate. The HisH subunit catalyzes the hydrolysis of glutamine to glutamate and ammonia as part of the synthesis of IGP and AICAR. The resulting ammonia molecule is channeled to the active site of HisF. In Bacillus cytotoxicus (strain DSM 22905 / CIP 110041 / 391-98 / NVH 391-98), this protein is Imidazole glycerol phosphate synthase subunit HisH.